A 301-amino-acid chain; its full sequence is Protoheme IX farnesyltransferase (301 aa).

A run of 9 helical transmembrane segments spans residues 20–42, 55–75, 105–125, 126–146, 150–172, 176–198, 227–247, 249–269, and 280–300; these read FTEL…GMWL, VDVI…SGAF, ALMV…MTTW, QAGV…SLYA, LVSN…WFAV, FSIV…FYAI, MFFW…LGLV, VILA…GFKM, and FVYS…ISIF.

This sequence belongs to the UbiA prenyltransferase family. Protoheme IX farnesyltransferase subfamily. As to quaternary structure, interacts with CtaA.

It is found in the cell membrane. The enzyme catalyses heme b + (2E,6E)-farnesyl diphosphate + H2O = Fe(II)-heme o + diphosphate. The protein operates within porphyrin-containing compound metabolism; heme O biosynthesis; heme O from protoheme: step 1/1. In terms of biological role, converts heme B (protoheme IX) to heme O by substitution of the vinyl group on carbon 2 of heme B porphyrin ring with a hydroxyethyl farnesyl side group. The protein is Protoheme IX farnesyltransferase of Listeria innocua serovar 6a (strain ATCC BAA-680 / CLIP 11262).